The primary structure comprises 498 residues: Lysine--tRNA ligase (498 aa).

Glu-409 and Glu-416 together coordinate Mg(2+).

This sequence belongs to the class-II aminoacyl-tRNA synthetase family. As to quaternary structure, homodimer. Mg(2+) serves as cofactor.

The protein resides in the cytoplasm. The catalysed reaction is tRNA(Lys) + L-lysine + ATP = L-lysyl-tRNA(Lys) + AMP + diphosphate. The sequence is that of Lysine--tRNA ligase from Dichelobacter nodosus (strain VCS1703A).